Reading from the N-terminus, the 336-residue chain is tRNA N6-adenosine threonylcarbamoyltransferase (336 aa).

Residues His114 and His118 each contribute to the Fe cation site. Substrate is bound by residues 136–140 (LVSGG), Asp169, Gly182, Asp186, and Asn275. Residue Asp301 coordinates Fe cation.

The protein belongs to the KAE1 / TsaD family. Requires Fe(2+) as cofactor.

Its subcellular location is the cytoplasm. It catalyses the reaction L-threonylcarbamoyladenylate + adenosine(37) in tRNA = N(6)-L-threonylcarbamoyladenosine(37) in tRNA + AMP + H(+). In terms of biological role, required for the formation of a threonylcarbamoyl group on adenosine at position 37 (t(6)A37) in tRNAs that read codons beginning with adenine. Is involved in the transfer of the threonylcarbamoyl moiety of threonylcarbamoyl-AMP (TC-AMP) to the N6 group of A37, together with TsaE and TsaB. TsaD likely plays a direct catalytic role in this reaction. In Streptococcus mutans serotype c (strain ATCC 700610 / UA159), this protein is tRNA N6-adenosine threonylcarbamoyltransferase.